Reading from the N-terminus, the 408-residue chain is Diguanylate cyclase DgcN (408 aa).

At 1-24 the chain is on the cytoplasmic side; the sequence is MMDNDNSLNKRPTFKRALRNISMT. Residues 25 to 45 form a helical membrane-spanning segment; sequence SIFITMMLIWLLLSVTSVLTL. The Periplasmic segment spans residues 46-52; the sequence is KQYAQKN. Residues 53–73 form a helical membrane-spanning segment; the sequence is LALTAATMTYSLEAAVVFADG. At 74-112 the chain is on the cytoplasmic side; it reads PAATETLAALGQQGQFSTAEVRDKQQNILASWHYTRKDP. A helical membrane pass occupies residues 113–133; the sequence is GDTFSNFISHWLFPAPIIQPI. Residues 134 to 154 lie on the Periplasmic side of the membrane; the sequence is RHNGETIGEVRLTARDSSISH. Residues 155–175 form a helical membrane-spanning segment; that stretch reads FIWFSLAVLTGCILLASGIAI. Topologically, residues 176–408 are cytoplasmic; it reads TLTRHLHNGL…KHQRAEKLVR (233 aa). In terms of domain architecture, HAMP spans 183 to 236; the sequence is NGLVEALKNITDVVHDVRSNRNFSRRVSEERIAEFHRFALDFNSLLDEMEEWQL. In terms of domain architecture, GGDEF spans 278–408; it reads KTSALLFLDG…KHQRAEKLVR (131 aa). D286 lines the Mg(2+) pocket. N294, H299, and D303 together coordinate substrate. D329 is a Mg(2+) binding site. Catalysis depends on D329, which acts as the Proton acceptor.

Homodimer. Interacts with the cell division proteins FtsZ and ZipA. The cofactor is Mg(2+).

The protein resides in the cell inner membrane. It catalyses the reaction 2 GTP = 3',3'-c-di-GMP + 2 diphosphate. Its pathway is purine metabolism; 3',5'-cyclic di-GMP biosynthesis. Inhibited by YfiR, which prevents relocation to the midcell. A reductive stress signal is required to inactivate YfiR and turn on the DGC activity of DgcN. Bifunctional protein that catalyzes the synthesis of cyclic-di-GMP (c-di-GMP) in response to reductive stress and then dynamically relocates to the division site to arrest cell division in response to envelope stress. In the presence of high intracellular c-di-GMP levels, and in response to envelope stress, interacts with cell division proteins and halts cell division, without disassembling the Z ring, but by blocking its further progress toward cytokinesis. Part of a network that regulates cell motility by altering levels of c-di-GMP. The sequence is that of Diguanylate cyclase DgcN from Escherichia coli (strain K12).